Here is a 374-residue protein sequence, read N- to C-terminus: UPF0754 membrane protein NWMN_1738 (374 aa).

2 helical membrane-spanning segments follow: residues 4–24 (LFIIIFMIVVGAIIGGITNVI) and 354–374 (SLGFILGGIIGFFQGLVAIFV).

The protein belongs to the UPF0754 family.

Its subcellular location is the cell membrane. The protein is UPF0754 membrane protein NWMN_1738 of Staphylococcus aureus (strain Newman).